We begin with the raw amino-acid sequence, 261 residues long: [LysW]-aminoadipate/[LysW]-glutamate kinase (261 aa).

Residues 35 to 36 (GG), Arg-62, and Asn-166 contribute to the substrate site.

This sequence belongs to the acetylglutamate kinase family. LysZ subfamily.

The protein localises to the cytoplasm. It catalyses the reaction [amino-group carrier protein]-C-terminal-N-(1,4-dicarboxybutan-1-yl)-L-glutamine + ATP = [amino-group carrier protein]-C-terminal-N-(1-carboxy-5-phosphooxy-5-oxopentan-1-yl)-L-glutamine + ADP. The enzyme catalyses [amino-group carrier protein]-C-terminal-gamma-(L-glutamyl)-L-glutamate + ATP = [amino-group carrier protein]-C-terminal-gamma-(5-phospho-L-glutamyl)-L-glutamate + ADP. It participates in amino-acid biosynthesis; L-lysine biosynthesis via AAA pathway; L-lysine from L-alpha-aminoadipate (Thermus route): step 2/5. It functions in the pathway amino-acid biosynthesis; L-arginine biosynthesis. Its function is as follows. Involved in both the arginine and lysine biosynthetic pathways. Phosphorylates the LysW-bound precursors glutamate (for arginine biosynthesis), respectively alpha-aminoadipate (for lysine biosynthesis). This is [LysW]-aminoadipate/[LysW]-glutamate kinase from Sulfurisphaera tokodaii (strain DSM 16993 / JCM 10545 / NBRC 100140 / 7) (Sulfolobus tokodaii).